The chain runs to 35 residues: U1-theraphotoxin-Hs1f (35 aa).

3 disulfide bridges follow: Cys-3–Cys-16, Cys-7–Cys-27, and Cys-21–Cys-32.

The protein belongs to the neurotoxin 12 (Hwtx-2) family. 02 (Hwtx-2) subfamily. As to expression, expressed by the venom gland.

The protein localises to the secreted. Blocks neuromuscular transmission. Acts cooperatively to potentiate the activity of huwentoxin-I. Paralyzes locusts and kills mice following intracerebroventricular injection. This Cyriopagopus schmidti (Chinese bird spider) protein is U1-theraphotoxin-Hs1f.